We begin with the raw amino-acid sequence, 393 residues long: Formate-dependent phosphoribosylglycinamide formyltransferase (393 aa).

Residues 22 to 23 and Glu82 each bind N(1)-(5-phospho-beta-D-ribosyl)glycinamide; that span reads EL. Residues Arg114, Lys155, 160–165, 195–198, and Glu203 contribute to the ATP site; these read SSGKGQ and EGFI. Positions 119-308 constitute an ATP-grasp domain; the sequence is RLAAEELDLP…QFALHARAIL (190 aa). Residues Glu267 and Glu279 each coordinate Mg(2+). Residues Asp286, Lys356, and 363–364 contribute to the N(1)-(5-phospho-beta-D-ribosyl)glycinamide site; that span reads RR.

The protein belongs to the PurK/PurT family. As to quaternary structure, homodimer.

The enzyme catalyses N(1)-(5-phospho-beta-D-ribosyl)glycinamide + formate + ATP = N(2)-formyl-N(1)-(5-phospho-beta-D-ribosyl)glycinamide + ADP + phosphate + H(+). Its pathway is purine metabolism; IMP biosynthesis via de novo pathway; N(2)-formyl-N(1)-(5-phospho-D-ribosyl)glycinamide from N(1)-(5-phospho-D-ribosyl)glycinamide (formate route): step 1/1. In terms of biological role, involved in the de novo purine biosynthesis. Catalyzes the transfer of formate to 5-phospho-ribosyl-glycinamide (GAR), producing 5-phospho-ribosyl-N-formylglycinamide (FGAR). Formate is provided by PurU via hydrolysis of 10-formyl-tetrahydrofolate. This chain is Formate-dependent phosphoribosylglycinamide formyltransferase, found in Pseudomonas fluorescens (strain ATCC BAA-477 / NRRL B-23932 / Pf-5).